Here is a 548-residue protein sequence, read N- to C-terminus: Glutamyl-tRNA(Gln) amidotransferase subunit B, chloroplastic/mitochondrial (548 aa).

It belongs to the GatB/GatE family. GatB subfamily. As to quaternary structure, subunit of the heterotrimeric GatCAB amidotransferase (AdT) complex, composed of A, B and C subunits.

The protein resides in the mitochondrion. It is found in the plastid. The protein localises to the chloroplast. The catalysed reaction is L-glutamyl-tRNA(Gln) + L-glutamine + ATP + H2O = L-glutaminyl-tRNA(Gln) + L-glutamate + ADP + phosphate + H(+). Functionally, allows the formation of correctly charged Gln-tRNA(Gln) through the transamidation of misacylated Glu-tRNA(Gln) in chloroplasts and mitochondria. The reaction takes place in the presence of glutamine and ATP through an activated gamma-phospho-Glu-tRNA(Gln). The protein is Glutamyl-tRNA(Gln) amidotransferase subunit B, chloroplastic/mitochondrial of Sorghum bicolor (Sorghum).